The chain runs to 365 residues: Phosphoserine aminotransferase (365 aa).

R42 provides a ligand contact to L-glutamate. Pyridoxal 5'-phosphate contacts are provided by residues 76–77 (AR), W103, T154, D175, and Q198. K199 bears the N6-(pyridoxal phosphate)lysine mark. Residue 242–243 (NT) coordinates pyridoxal 5'-phosphate.

This sequence belongs to the class-V pyridoxal-phosphate-dependent aminotransferase family. SerC subfamily. As to quaternary structure, homodimer. Requires pyridoxal 5'-phosphate as cofactor.

It is found in the cytoplasm. It carries out the reaction O-phospho-L-serine + 2-oxoglutarate = 3-phosphooxypyruvate + L-glutamate. It catalyses the reaction 4-(phosphooxy)-L-threonine + 2-oxoglutarate = (R)-3-hydroxy-2-oxo-4-phosphooxybutanoate + L-glutamate. It functions in the pathway amino-acid biosynthesis; L-serine biosynthesis; L-serine from 3-phospho-D-glycerate: step 2/3. The protein operates within cofactor biosynthesis; pyridoxine 5'-phosphate biosynthesis; pyridoxine 5'-phosphate from D-erythrose 4-phosphate: step 3/5. In terms of biological role, catalyzes the reversible conversion of 3-phosphohydroxypyruvate to phosphoserine and of 3-hydroxy-2-oxo-4-phosphonooxybutanoate to phosphohydroxythreonine. This Blochmanniella floridana protein is Phosphoserine aminotransferase.